The primary structure comprises 843 residues: MPLSYQHFRKLLLLDEEAGPLEEELPRLADEGLNRRVADDLNLGNLNVSIPWTHKVGNFTGLYSSTVPCFNPKWQTPSFPDIHLQEDIVDRCKQFVGPLTVNENRRLKLIMPARFYPNVTKYLPLDKGIKPYYPEYVVNHYFQTRHYLHTLWEAGILYKRESTRSASFCGSPYSWEQDLQHGRLVFQTSKRHGDKSFCPQSPGILPRSSVGPCIQSQLRKSRLGPQPAQGQLAGRQQGGSGSIRARVHPSPWGTVGVEPSGSGPTHNCASSSSSCLHQSAVRKAAYSLISTSKGHSSSGHAVELHHFPPNSSRSQSQGPVLSCWWLQFRNSEPCSEYCLYHIVNLIEDWGPCTEHGEHRIRTPRTPARVTGGVFLVDKNPHNTTESRLVVDFSQFSRGNTRVSWPKFAVPNLQSLTNLLSSNLSWLSLDVSAAFYHLPLHPAAMPHLLVGSSGLSRYVARLSSNSRIINNQHRTMQNLHNSCSRNLYVSLMLLYKTYGRKLHLYSHPIILGFRKIPMGVGLSPFLLAQFTSAICSVVRRAFPHCLAFSYMDDVVLGAKSVQHLESLYAAVTNFLLSLGIHLNPHKTKRWGYSLNFMGYVIGSWGTLPQEHIVQKIKMCFRKLPVNRPIDWKVCQRIVGLLGFAAPFTQCGYPALMPLYACIQAKQAFTFSPTYKAFLSKQYLNLYPVARQRPGLCQVFADATPTGWGLAIGHQRMRGTFVSPLPIHTAELLAACFARSRSGAKLIGTDNSVVLSRKYTAFPWLLGCAANWILRGTSFVYVPSALNPADDPSRGRLGLYRPLLRLLYRPTTGRTSLYADSPSVPSHLPDRVHFASPLHVAWXPP.

A terminal protein domain (TP) region spans residues 1-177 (MPLSYQHFRK…FCGSPYSWEQ (177 aa)). The spacer stretch occupies residues 178-346 (DLQHGRLVFQ…YCLYHIVNLI (169 aa)). Residues 219 to 250 (RKSRLGPQPAQGQLAGRQQGGSGSIRARVHPS) are disordered. Positions 223–235 (LGPQPAQGQLAGR) are enriched in low complexity. The tract at residues 347–690 (EDWGPCTEHG…YLNLYPVARQ (344 aa)) is polymerase/reverse transcriptase domain (RT). The Reverse transcriptase domain maps to 357-600 (EHRIRTPRTP…YSLNFMGYVI (244 aa)). The Mg(2+) site is built by D429, D551, and D552.

Belongs to the hepadnaviridae P protein family.

The catalysed reaction is DNA(n) + a 2'-deoxyribonucleoside 5'-triphosphate = DNA(n+1) + diphosphate. It catalyses the reaction Endonucleolytic cleavage to 5'-phosphomonoester.. With respect to regulation, activated by host HSP70 and HSP40 in vitro to be able to bind the epsilon loop of the pgRNA. Because deletion of the RNase H region renders the protein partly chaperone-independent, the chaperones may be needed indirectly to relieve occlusion of the RNA-binding site by this domain. Inhibited by several reverse-transcriptase inhibitors: Lamivudine, Adefovir and Entecavir. Multifunctional enzyme that converts the viral RNA genome into dsDNA in viral cytoplasmic capsids. This enzyme displays a DNA polymerase activity that can copy either DNA or RNA templates, and a ribonuclease H (RNase H) activity that cleaves the RNA strand of RNA-DNA heteroduplexes in a partially processive 3'- to 5'-endonucleasic mode. Neo-synthesized pregenomic RNA (pgRNA) are encapsidated together with the P protein, and reverse-transcribed inside the nucleocapsid. Initiation of reverse-transcription occurs first by binding the epsilon loop on the pgRNA genome, and is initiated by protein priming, thereby the 5'-end of (-)DNA is covalently linked to P protein. Partial (+)DNA is synthesized from the (-)DNA template and generates the relaxed circular DNA (RC-DNA) genome. After budding and infection, the RC-DNA migrates in the nucleus, and is converted into a plasmid-like covalently closed circular DNA (cccDNA). The activity of P protein does not seem to be necessary for cccDNA generation, and is presumably released from (+)DNA by host nuclear DNA repair machinery. The polypeptide is Protein P (Hepatitis B virus genotype B2 (isolate Vietnam/16091/1992) (HBV-B)).